A 396-amino-acid polypeptide reads, in one-letter code: Imidazolonepropionase (396 aa).

2 residues coordinate Fe(3+): His70 and His72. Residues His70 and His72 each contribute to the Zn(2+) site. 4-imidazolone-5-propanoate-binding residues include Arg79, Tyr137, and His164. Tyr137 serves as a coordination point for N-formimidoyl-L-glutamate. His227 is a Fe(3+) binding site. Zn(2+) is bound at residue His227. Gln230 contacts 4-imidazolone-5-propanoate. Asp301 lines the Fe(3+) pocket. Asp301 lines the Zn(2+) pocket. Asn303 and Gly305 together coordinate N-formimidoyl-L-glutamate. Ser306 is a binding site for 4-imidazolone-5-propanoate.

Belongs to the metallo-dependent hydrolases superfamily. HutI family. Zn(2+) serves as cofactor. The cofactor is Fe(3+).

Its subcellular location is the cytoplasm. It catalyses the reaction 4-imidazolone-5-propanoate + H2O = N-formimidoyl-L-glutamate. It participates in amino-acid degradation; L-histidine degradation into L-glutamate; N-formimidoyl-L-glutamate from L-histidine: step 3/3. Functionally, catalyzes the hydrolytic cleavage of the carbon-nitrogen bond in imidazolone-5-propanoate to yield N-formimidoyl-L-glutamate. It is the third step in the universal histidine degradation pathway. This Mycolicibacterium smegmatis (strain ATCC 700084 / mc(2)155) (Mycobacterium smegmatis) protein is Imidazolonepropionase.